Consider the following 293-residue polypeptide: DNA repair protein RecO (293 aa).

It belongs to the RecO family.

Its function is as follows. Involved in DNA repair and RecF pathway recombination. This is DNA repair protein RecO from Acaryochloris marina (strain MBIC 11017).